Consider the following 1605-residue polypeptide: Zinc finger protein jing homolog (1605 aa).

Positions 1-15 (MQHQSLSVRNSSGIS) are enriched in polar residues. Disordered regions lie at residues 1–28 (MQHQSLSVRNSSGISGNRDENFPSVRSS), 60–117 (QWPW…QQSN), 359–388 (TRKVSHSPQGGLGVGQPKKPVTIAPRTSDP), 441–468 (QQHQQSTQTQQQTSQNQSQPQQNQTQAQ), 856–877 (STTSSKPPPPIKPISSTEPPKL), 917–947 (TKATSTTPIKDKPKPNLPMSEPPALAPASCT), and 991–1213 (NDSG…TDFL). Over residues 64-117 (NTSNNTNATNSNNVQSNNNSSTATSNSSTNSNNSPAVNTPTTQNQSQPTTQQSN) the composition is skewed to low complexity. Polar residues predominate over residues 991–1000 (NDSGIVANSS). Positions 1021 to 1030 (PQKKDEESRQ) are enriched in basic and acidic residues. Residues 1035-1049 (SPVPSPSPLSEPPVI) are compositionally biased toward pro residues. Acidic residues-rich tracts occupy residues 1053-1090 (SEPEPEPEPELEPEPEMEPEPETEPEPEVEPEPEDEPH) and 1099-1110 (SSEAVELPELED). Over residues 1112–1126 (QPSPPLPCELPPPPT) the composition is skewed to pro residues. The segment covering 1135–1149 (LSLPPSQKSPKSLLL) has biased composition (low complexity). The span at 1165 to 1201 (QESMSSDQDYSNQSPLDESSPTGSAEPSESQRSTTPV) shows a compositional bias: polar residues. The C2H2-type 1 zinc finger occupies 1260–1285 (GVCYWSNCDAQFDTSSKLLDHLQIQH). The C2H2-type 2; degenerate zinc finger occupies 1293–1320 (FACLWDGCKVHNKESCSRRWLERHVLSH). The C2H2-type 3 zinc-finger motif lies at 1326 to 1350 (HKCIVAGCGMRFGSQLALEKHVNHH). Disordered regions lie at residues 1352–1371 (NNTDNASAGKRSSDPPLPKV) and 1511–1605 (CSRS…SSTS). 2 stretches are compositionally biased toward low complexity: residues 1511-1537 (CSRSSFSSSSSSSSSSGCSSASSSLIS) and 1556-1605 (KQSY…SSTS).

The protein belongs to the AEBP2/jing C2H2-type zinc-finger family.

It localises to the nucleus. May functionally interact with Polycomb group (PcG) and trithorax group (trxG) proteins to repress transcription. This Aedes aegypti (Yellowfever mosquito) protein is Zinc finger protein jing homolog.